The primary structure comprises 165 residues: Thiol peroxidase (165 aa).

The 148-residue stretch at 18-165 (PQVGDNLAEF…DYDAALAALN (148 aa)) folds into the Thioredoxin domain. The Cysteine sulfenic acid (-SOH) intermediate role is filled by cysteine 60. The cysteines at positions 60 and 94 are disulfide-linked.

Belongs to the peroxiredoxin family. Tpx subfamily. In terms of assembly, homodimer.

The enzyme catalyses a hydroperoxide + [thioredoxin]-dithiol = an alcohol + [thioredoxin]-disulfide + H2O. Functionally, thiol-specific peroxidase that catalyzes the reduction of hydrogen peroxide and organic hydroperoxides to water and alcohols, respectively. Plays a role in cell protection against oxidative stress by detoxifying peroxides. The chain is Thiol peroxidase from Corynebacterium glutamicum (strain ATCC 13032 / DSM 20300 / JCM 1318 / BCRC 11384 / CCUG 27702 / LMG 3730 / NBRC 12168 / NCIMB 10025 / NRRL B-2784 / 534).